The following is a 298-amino-acid chain: Putative cysteine protease YopT-like blr2058 (298 aa).

Residues 1–14 (MYNRVDGEYAHTEQ) show a composition bias toward basic and acidic residues. Disordered regions lie at residues 1–25 (MYNR…ADGS) and 59–80 (SDAI…SSSS). The segment covering 65-80 (SSNTSGLSTSSLSSSS) has biased composition (low complexity). Cys109 is an active-site residue. The segment covering 137 to 162 (NHRSAARRQEQSEKLKTQLKEDKAEG) has biased composition (basic and acidic residues). Positions 137–166 (NHRSAARRQEQSEKLKTQLKEDKAEGSHNF) are disordered. Catalysis depends on residues His223 and Asp238.

It belongs to the peptidase C58 family.

Functionally, potential cysteine protease, which may play a central role after invasion of host cell. The sequence is that of Putative cysteine protease YopT-like blr2058 from Bradyrhizobium diazoefficiens (strain JCM 10833 / BCRC 13528 / IAM 13628 / NBRC 14792 / USDA 110).